A 196-amino-acid chain; its full sequence is MIDKTDITGLILAGGRGSRMGGIDKGLQNYQGMPMAMHALLRLAPQVGQAMVNANRNLGAYEAMGVPVWPDNLPDFAGPLAGLAVGLERCETPYLATVPCDCPRFPLDLVERLAGELARQDADIAMAATLQNGQLRTQPVFCLMKTSLLPSLLAFLQSGQRKIDAWTAMHRCVEVRFDDAAAFAGANTLAELQQLP.

GTP-binding positions include 12-14 (LAG), K25, N53, D71, and D101. A Mg(2+)-binding site is contributed by D101.

It belongs to the MobA family. Monomer. It depends on Mg(2+) as a cofactor.

The protein resides in the cytoplasm. It catalyses the reaction Mo-molybdopterin + GTP + H(+) = Mo-molybdopterin guanine dinucleotide + diphosphate. In terms of biological role, transfers a GMP moiety from GTP to Mo-molybdopterin (Mo-MPT) cofactor (Moco or molybdenum cofactor) to form Mo-molybdopterin guanine dinucleotide (Mo-MGD) cofactor. The sequence is that of Molybdenum cofactor guanylyltransferase from Bordetella petrii (strain ATCC BAA-461 / DSM 12804 / CCUG 43448).